The primary structure comprises 358 residues: Serine/threonine-protein phosphatase 2A activator 2 (358 aa).

In terms of assembly, interacts with the phosphatase PP2A catalytic subunits PPH21 and PPH22. Forms a ternary complex with PPH21-TAP42.

The protein resides in the cytoplasm. The enzyme catalyses [protein]-peptidylproline (omega=180) = [protein]-peptidylproline (omega=0). Its function is as follows. PPIases accelerate the folding of proteins. It catalyzes the cis-trans isomerization of proline imidic peptide bonds in oligopeptides. Acts as a regulatory subunit for TAP42-associated PP2A-like phosphatases modulating their activity or substrate specificity, probably by inducing a conformational change in the catalytic subunit, a direct target of the PPIase. Can reactivate inactive phosphatase PP2A-phosphatase methylesterase complexes (PP2Ai) in presence of ATP and Mg(2+) by dissociating the inactive form from the complex. Acts also inhibitory at high concentrations. Involved in the regulation of cell cycle progression, mitotic spindle formation and bud morphogenesis. The polypeptide is Serine/threonine-protein phosphatase 2A activator 2 (RRD2) (Saccharomyces cerevisiae (strain ATCC 204508 / S288c) (Baker's yeast)).